The primary structure comprises 333 residues: Galactinol synthase 1 (333 aa).

Lys-104 is a catalytic residue. Residues Asp-120, Asp-122, and His-257 each coordinate Mn(2+).

The protein belongs to the glycosyltransferase 8 family. Galactosyltransferase subfamily. A divalent metal cation is required as a cofactor. In terms of tissue distribution, expressed in source leaves, specifically in the mesophyll.

The protein resides in the cytoplasm. It carries out the reaction myo-inositol + UDP-alpha-D-galactose = alpha-D-galactosyl-(1-&gt;3)-1D-myo-inositol + UDP + H(+). Its function is as follows. Major galactinol synthase mainly involved in the biosynthesis of storage raffinose family oligosaccharides (RFOs) that function as osmoprotectants. May promote plant stress tolerance. The polypeptide is Galactinol synthase 1 (GOLS1) (Ajuga reptans (Bugle)).